The primary structure comprises 261 residues: Cytochrome c oxidase subunit 3 (261 aa).

Residues 1-15 are Mitochondrial matrix-facing; that stretch reads MAHQAHAYHMVDPSP. Residues 16 to 34 traverse the membrane as a helical segment; that stretch reads WPLTGAVAALLMTSGLAVW. Over 35-40 the chain is Mitochondrial intermembrane; it reads FHFHSM. The chain crosses the membrane as a helical span at residues 41 to 66; sequence YLLYLGLTLLLLTMVQWWRDIIREGT. Topologically, residues 67–72 are mitochondrial matrix; it reads FQGHHT. Residues 73-105 traverse the membrane as a helical segment; that stretch reads PPVQKGLRYGMILFITSEVFFFLGFFWAFYHSS. The Mitochondrial intermembrane segment spans residues 106–128; the sequence is LAPTPELGGCWPPTGIYPLDPFE. Residues 129-152 form a helical membrane-spanning segment; sequence VPLLNTAVLLASGVTVTWAHHSLM. Topologically, residues 153 to 155 are mitochondrial matrix; that stretch reads EGN. A helical transmembrane segment spans residues 156-183; sequence RKEAIQALTLTVLLGFYFTALQAMEYYE. The Mitochondrial intermembrane portion of the chain corresponds to 184 to 190; it reads APFTIAD. Residues 191–223 form a helical membrane-spanning segment; the sequence is GVYGSTFFVATGFHGLHVIIGSTFLMVCLLRQI. Residues 224-232 are Mitochondrial matrix-facing; it reads QYHFTSEHH. A helical transmembrane segment spans residues 233–256; it reads FGFERAAWYWHFVDVVWLFLYVSI. The Mitochondrial intermembrane portion of the chain corresponds to 257 to 261; the sequence is YWWGS.

It belongs to the cytochrome c oxidase subunit 3 family. As to quaternary structure, component of the cytochrome c oxidase (complex IV, CIV), a multisubunit enzyme composed of 14 subunits. The complex is composed of a catalytic core of 3 subunits MT-CO1, MT-CO2 and MT-CO3, encoded in the mitochondrial DNA, and 11 supernumerary subunits COX4I, COX5A, COX5B, COX6A, COX6B, COX6C, COX7A, COX7B, COX7C, COX8 and NDUFA4, which are encoded in the nuclear genome. The complex exists as a monomer or a dimer and forms supercomplexes (SCs) in the inner mitochondrial membrane with NADH-ubiquinone oxidoreductase (complex I, CI) and ubiquinol-cytochrome c oxidoreductase (cytochrome b-c1 complex, complex III, CIII), resulting in different assemblies (supercomplex SCI(1)III(2)IV(1) and megacomplex MCI(2)III(2)IV(2)).

Its subcellular location is the mitochondrion inner membrane. It catalyses the reaction 4 Fe(II)-[cytochrome c] + O2 + 8 H(+)(in) = 4 Fe(III)-[cytochrome c] + 2 H2O + 4 H(+)(out). Component of the cytochrome c oxidase, the last enzyme in the mitochondrial electron transport chain which drives oxidative phosphorylation. The respiratory chain contains 3 multisubunit complexes succinate dehydrogenase (complex II, CII), ubiquinol-cytochrome c oxidoreductase (cytochrome b-c1 complex, complex III, CIII) and cytochrome c oxidase (complex IV, CIV), that cooperate to transfer electrons derived from NADH and succinate to molecular oxygen, creating an electrochemical gradient over the inner membrane that drives transmembrane transport and the ATP synthase. Cytochrome c oxidase is the component of the respiratory chain that catalyzes the reduction of oxygen to water. Electrons originating from reduced cytochrome c in the intermembrane space (IMS) are transferred via the dinuclear copper A center (CU(A)) of subunit 2 and heme A of subunit 1 to the active site in subunit 1, a binuclear center (BNC) formed by heme A3 and copper B (CU(B)). The BNC reduces molecular oxygen to 2 water molecules using 4 electrons from cytochrome c in the IMS and 4 protons from the mitochondrial matrix. This Squalus acanthias (Spiny dogfish) protein is Cytochrome c oxidase subunit 3 (MT-CO3).